Reading from the N-terminus, the 568-residue chain is Multidrug and toxin extrusion protein 1 (568 aa).

M1 is modified (N-acetylmethionine). At 1-36 (MEAPVELGPGGRQASPERRHWLRCLVLSDFREELRA) the chain is on the cytoplasmic side. The helical transmembrane segment at 37–57 (LLVLACPAFLAQLMVFLISFV) threads the bilayer. The Extracellular segment spans residues 58 to 71 (SSVFCGHLSKLELN). Residues 72–92 (AVTLAIAVINVMGVSVGFGLS) traverse the membrane as a helical segment. At 93-119 (SACDTLISQTYGSRNLKHVGVILQRGS) the chain is on the cytoplasmic side. A helical transmembrane segment spans residues 120–140 (LILLLCCLPCWALFLNTQHIL). The Extracellular segment spans residues 141–151 (LLFRQDPAVSR). Residues 152-172 (LTQTYVTIFIPALPATFLYTL) form a helical membrane-spanning segment. Topologically, residues 173–175 (QVK) are cytoplasmic. A helical membrane pass occupies residues 176–196 (YLLNQGIVLPQVVTGVAANLV). The Extracellular portion of the chain corresponds to 197–214 (NALANYLFVYQLHLGVMG). The helical transmembrane segment at 215–235 (SALANTVAQFTLALLLFLYIL) threads the bilayer. The Cytoplasmic segment spans residues 236–255 (RSKVYQATWGGWSLECLQDW). The chain crosses the membrane as a helical span at residues 256–278 (ASFFRLAIPSMLMLCMEWWAYEI). The Extracellular portion of the chain corresponds to 279–294 (GSFLSGILGMVELGAQ). Residues 295–315 (SVTYELAVIVYMIPMGLSVAV) traverse the membrane as a helical segment. The Cytoplasmic segment spans residues 316 to 335 (NVRVGNALGAGNIEQAKKSS). A helical transmembrane segment spans residues 336–356 (AVALLVTELIAVVFCVMLLSC). At 357–369 (KDLVGYIFTSDRD) the chain is on the extracellular side. The chain crosses the membrane as a helical span at residues 370-390 (IIALVAQVTPIYAVSHLFESL). The Cytoplasmic segment spans residues 391–407 (AGTSGGILRGSGNQKFG). Residues 408-430 (AIVNAIGYYVVGLPIGIALMFAA) form a helical membrane-spanning segment. The Extracellular portion of the chain corresponds to 431 to 433 (KLG). Residues 434–456 (VIGLWLGIVVCAVSQAVCFLGFI) form a helical membrane-spanning segment. The Cytoplasmic portion of the chain corresponds to 457 to 544 (ARLNWTKACQ…LSGKQLALRR (88 aa)). A helical membrane pass occupies residues 545–565 (GLLLLGVILVLLAGILVKVYV). Topologically, residues 566–568 (RTQ) are extracellular.

It belongs to the multi antimicrobial extrusion (MATE) (TC 2.A.66.1) family. Predominantly expressed in kidney and liver.

The protein localises to the cell membrane. It is found in the apical cell membrane. The enzyme catalyses thiamine(out) + H(+)(in) = thiamine(in) + H(+)(out). It carries out the reaction estrone 3-sulfate(in) + H(+)(out) = estrone 3-sulfate(out) + H(+)(in). The catalysed reaction is creatinine(in) + H(+)(out) = creatinine(out) + H(+)(in). It catalyses the reaction agmatine(in) + H(+)(out) = agmatine(out) + H(+)(in). Its function is as follows. Multidrug efflux pump that functions as a H(+)/organic cation antiporter. Plays a physiological role in the excretion of cationic compounds including endogenous metabolites, drugs, toxins through the kidney and liver, into urine and bile respectively. Mediates the efflux of endogenous compounds such as creatinine, vitamin B1/thiamine, agmatine and estrone-3-sulfate. May also contribute to regulate the transport of cationic compounds in testis across the blood-testis-barrier. The protein is Multidrug and toxin extrusion protein 1 (SLC47A1) of Oryctolagus cuniculus (Rabbit).